Here is a 581-residue protein sequence, read N- to C-terminus: Glutamyl-tRNA reductase (581 aa).

Substrate is bound by residues 49–52, S109, 114–116, and Q120; these read TCNR and EGQ. C50 acts as the Nucleophile in catalysis. 192-197 provides a ligand contact to NADP(+); that stretch reads GAGSMS. Positions 292-416 are insert; that stretch reads PAVEDTAVQE…AEAPRPQPVL (125 aa).

It belongs to the glutamyl-tRNA reductase family. Homodimer.

It carries out the reaction (S)-4-amino-5-oxopentanoate + tRNA(Glu) + NADP(+) = L-glutamyl-tRNA(Glu) + NADPH + H(+). Its pathway is porphyrin-containing compound metabolism; protoporphyrin-IX biosynthesis; 5-aminolevulinate from L-glutamyl-tRNA(Glu): step 1/2. Its function is as follows. Catalyzes the NADPH-dependent reduction of glutamyl-tRNA(Glu) to glutamate 1-semialdehyde (GSA). The sequence is that of Glutamyl-tRNA reductase from Streptomyces coelicolor (strain ATCC BAA-471 / A3(2) / M145).